The chain runs to 228 residues: UPF0758 protein CLI_3057 (228 aa).

In terms of domain architecture, MPN spans 106–228 (KINTPLDVSN…YVSMKEKGTI (123 aa)). His177, His179, and Asp190 together coordinate Zn(2+). The JAMM motif motif lies at 177 to 190 (HNHPSGDPTPSKED).

This sequence belongs to the UPF0758 family.

The chain is UPF0758 protein CLI_3057 from Clostridium botulinum (strain Langeland / NCTC 10281 / Type F).